The chain runs to 216 residues: Uracil-DNA glycosylase (216 aa).

Catalysis depends on aspartate 59, which acts as the Proton acceptor.

Belongs to the uracil-DNA glycosylase (UDG) superfamily. UNG family.

The protein localises to the cytoplasm. It catalyses the reaction Hydrolyzes single-stranded DNA or mismatched double-stranded DNA and polynucleotides, releasing free uracil.. Excises uracil residues from the DNA which can arise as a result of misincorporation of dUMP residues by DNA polymerase or due to deamination of cytosine. This is Uracil-DNA glycosylase from Staphylococcus epidermidis (strain ATCC 35984 / DSM 28319 / BCRC 17069 / CCUG 31568 / BM 3577 / RP62A).